The following is a 261-amino-acid chain: Phosphatidylglycerol--prolipoprotein diacylglyceryl transferase (261 aa).

A run of 4 helical transmembrane segments spans residues 17–37, 60–80, 92–112, and 121–141; these read FGIH…LWLG, ALFY…ALFY, ILFL…VMVA, and GLTF…GLGA. Arg143 serves as a coordination point for a 1,2-diacyl-sn-glycero-3-phospho-(1'-sn-glycerol). 3 consecutive transmembrane segments (helical) span residues 175–195, 203–223, and 237–257; these read PSQL…LWWY, GSVS…VEFT, and LSMG…LLIV.

It belongs to the Lgt family.

It localises to the cell inner membrane. The catalysed reaction is L-cysteinyl-[prolipoprotein] + a 1,2-diacyl-sn-glycero-3-phospho-(1'-sn-glycerol) = an S-1,2-diacyl-sn-glyceryl-L-cysteinyl-[prolipoprotein] + sn-glycerol 1-phosphate + H(+). It functions in the pathway protein modification; lipoprotein biosynthesis (diacylglyceryl transfer). Its function is as follows. Catalyzes the transfer of the diacylglyceryl group from phosphatidylglycerol to the sulfhydryl group of the N-terminal cysteine of a prolipoprotein, the first step in the formation of mature lipoproteins. This is Phosphatidylglycerol--prolipoprotein diacylglyceryl transferase from Methylobacillus flagellatus (strain ATCC 51484 / DSM 6875 / VKM B-1610 / KT).